The following is a 526-amino-acid chain: MSSELVKRHGHTHYANIPYGYYVLIVSFFYLVFLGVLRIILKPRAAGFNSSKRSRLAQKLYLVNPVVHLPILLVAVLLPFYRHYSISEHATVYIKRLGRLSYALLPLNLLLNLRPNWLLRNNYTYTDLIPLHKWLSRCIIIIAVVHGILFLINWALGESGTLAKKIANPYNLAGVLLFAPLISMIFFSIGPMRRFSYNAFYVIHNLTGISFIFVVAFHARPSVTIPYLLINIAILLWQGFAKFYYAKRTDILSKNTDYQNTNLVNVQLPRMALPDQFEPACHIRISPYSRLHPLYWLYPSHPFTVASLPSDTVVDLIISESHHPKSFKLELGAPYSVINNFDPAVPRSCLEQAKRVAIVCGGSGISFGLPLYRYFKEIHPVEYIQFIWLVKDAYQLKILDKLDTIGLLDGSNDCHAFITRSVDDPNSNQETAPDLEFELESMTQDVVDENGAFVSERDGSPTSKFKFASINLGRRIDWATDLSQFVEPALVDNTWLLTCGPSDLIESGRQYAADNSINFASEIYAL.

Helical transmembrane passes span 17–37 (IPYG…LGVL), 60–80 (LYLV…LLPF), 96–113 (RLGR…LLNL), 138–158 (CIII…ALGE), 172–192 (LAGV…IGPM), 199–219 (AFYV…AFHA), and 221–241 (PSVT…QGFA). The Ferric oxidoreductase domain maps to 97–214 (LGRLSYALLP…NLTGISFIFV (118 aa)). The 133-residue stretch at 238-370 (QGFAKFYYAK…GGSGISFGLP (133 aa)) folds into the FAD-binding FR-type domain.

Belongs to the ferric reductase (FRE) family. AIM14 subfamily.

It is found in the membrane. Functionally, probable cell surface metalloreductase. May be involved in iron or copper homeostasis. In Zygosaccharomyces rouxii (strain ATCC 2623 / CBS 732 / NBRC 1130 / NCYC 568 / NRRL Y-229), this protein is Probable metalloreductase AIM14 (AIM14).